The primary structure comprises 431 residues: Histidinol dehydrogenase (431 aa).

3 residues coordinate NAD(+): Y130, Q191, and N214. Substrate-binding residues include S237, Q259, and H262. The Zn(2+) site is built by Q259 and H262. Active-site proton acceptor residues include E327 and H328. 4 residues coordinate substrate: H328, D361, E415, and H420. D361 contributes to the Zn(2+) binding site. A Zn(2+)-binding site is contributed by H420.

The protein belongs to the histidinol dehydrogenase family. The cofactor is Zn(2+).

It carries out the reaction L-histidinol + 2 NAD(+) + H2O = L-histidine + 2 NADH + 3 H(+). It participates in amino-acid biosynthesis; L-histidine biosynthesis; L-histidine from 5-phospho-alpha-D-ribose 1-diphosphate: step 9/9. Its function is as follows. Catalyzes the sequential NAD-dependent oxidations of L-histidinol to L-histidinaldehyde and then to L-histidine. The chain is Histidinol dehydrogenase from Bradyrhizobium diazoefficiens (strain JCM 10833 / BCRC 13528 / IAM 13628 / NBRC 14792 / USDA 110).